Consider the following 89-residue polypeptide: Putative defensin-like protein 89 (89 aa).

A signal peptide spans 1–25 (MGFKNNLSLVSVMVFALILLPMISG). Intrachain disulfides connect Cys-30–Cys-66, Cys-36–Cys-57, Cys-42–Cys-64, and Cys-46–Cys-65.

It belongs to the DEFL family.

Its subcellular location is the secreted. The chain is Putative defensin-like protein 89 from Arabidopsis thaliana (Mouse-ear cress).